A 316-amino-acid polypeptide reads, in one-letter code: Methionyl-tRNA formyltransferase (316 aa).

112 to 115 (SLLP) is a binding site for (6S)-5,6,7,8-tetrahydrofolate.

This sequence belongs to the Fmt family.

The enzyme catalyses L-methionyl-tRNA(fMet) + (6R)-10-formyltetrahydrofolate = N-formyl-L-methionyl-tRNA(fMet) + (6S)-5,6,7,8-tetrahydrofolate + H(+). In terms of biological role, attaches a formyl group to the free amino group of methionyl-tRNA(fMet). The formyl group appears to play a dual role in the initiator identity of N-formylmethionyl-tRNA by promoting its recognition by IF2 and preventing the misappropriation of this tRNA by the elongation apparatus. The sequence is that of Methionyl-tRNA formyltransferase from Trichlorobacter lovleyi (strain ATCC BAA-1151 / DSM 17278 / SZ) (Geobacter lovleyi).